Reading from the N-terminus, the 271-residue chain is Cobalt import ATP-binding protein CbiO (271 aa).

Residues 2–236 (LATSDLWFRY…TEAMEHAGLT (235 aa)) form the ABC transporter domain. 34 to 41 (GANGCGKS) is a binding site for ATP.

This sequence belongs to the ABC transporter superfamily. Cobalt importer (TC 3.A.1.18.1) family. Forms an energy-coupling factor (ECF) transporter complex composed of an ATP-binding protein (A component, CbiO), a transmembrane protein (T component, CbiQ) and 2 possible substrate-capture proteins (S components, CbiM and CbiN) of unknown stoichimetry. Expression of just CbiMN in E.coli confers some cobalt uptake.

It localises to the cell inner membrane. The protein operates within cofactor biosynthesis; adenosylcobalamin biosynthesis. Its function is as follows. Part of the energy-coupling factor (ECF) transporter complex CbiMNOQ involved in cobalt import. The complex confers cobalt uptake upon expression in E.coli; can also transport nickel with a very low affinity. Presumably responsible for energy coupling to the transport system. The protein is Cobalt import ATP-binding protein CbiO of Salmonella typhimurium (strain LT2 / SGSC1412 / ATCC 700720).